The sequence spans 255 residues: tRNA (guanine-N(1)-)-methyltransferase (255 aa).

Residues G114 and I134–L139 each bind S-adenosyl-L-methionine.

It belongs to the RNA methyltransferase TrmD family. Homodimer.

The protein localises to the cytoplasm. It catalyses the reaction guanosine(37) in tRNA + S-adenosyl-L-methionine = N(1)-methylguanosine(37) in tRNA + S-adenosyl-L-homocysteine + H(+). In terms of biological role, specifically methylates guanosine-37 in various tRNAs. This chain is tRNA (guanine-N(1)-)-methyltransferase, found in Blochmanniella pennsylvanica (strain BPEN).